The chain runs to 338 residues: Ketol-acid reductoisomerase (NADP(+)) (338 aa).

The region spanning 1–181 (MKVFYDKDCD…GGGRTGIIET (181 aa)) is the KARI N-terminal Rossmann domain. Residues 24-27 (YGSQ), R47, S50, T52, and 82-85 (DEFQ) contribute to the NADP(+) site. Residue H107 is part of the active site. G133 is an NADP(+) binding site. Residues 182–327 (TFKDETETDL…EKLRSMMPWI (146 aa)) enclose the KARI C-terminal knotted domain. Positions 190, 194, 226, and 230 each coordinate Mg(2+). S251 is a binding site for substrate.

The protein belongs to the ketol-acid reductoisomerase family. Mg(2+) serves as cofactor.

The enzyme catalyses (2R)-2,3-dihydroxy-3-methylbutanoate + NADP(+) = (2S)-2-acetolactate + NADPH + H(+). It catalyses the reaction (2R,3R)-2,3-dihydroxy-3-methylpentanoate + NADP(+) = (S)-2-ethyl-2-hydroxy-3-oxobutanoate + NADPH + H(+). Its pathway is amino-acid biosynthesis; L-isoleucine biosynthesis; L-isoleucine from 2-oxobutanoate: step 2/4. The protein operates within amino-acid biosynthesis; L-valine biosynthesis; L-valine from pyruvate: step 2/4. In terms of biological role, involved in the biosynthesis of branched-chain amino acids (BCAA). Catalyzes an alkyl-migration followed by a ketol-acid reduction of (S)-2-acetolactate (S2AL) to yield (R)-2,3-dihydroxy-isovalerate. In the isomerase reaction, S2AL is rearranged via a Mg-dependent methyl migration to produce 3-hydroxy-3-methyl-2-ketobutyrate (HMKB). In the reductase reaction, this 2-ketoacid undergoes a metal-dependent reduction by NADPH to yield (R)-2,3-dihydroxy-isovalerate. The sequence is that of Ketol-acid reductoisomerase (NADP(+)) from Pseudomonas syringae pv. tomato (strain ATCC BAA-871 / DC3000).